A 735-amino-acid chain; its full sequence is MATKFPSFSQGLAQDPTTRRIWYGIATAHDFESHDGMTEERLYQKLFSTHFGHLAIIGLWVSGNLFHIAWQGNFEQWVADPLHVRPIAHAIWDPHFGQGAIDAFTQAGASSPVNIAYSGLYHWFYTIGMTTNAELYQGSIFMMILSAWALFAGWLHLQPKFRPSLAWFKNAESRLNHHLAVLFGFSSIAWTGHLVHVAIPESRGQHVGWDNFLSVMPHPAGLGPFFTGNWGVYAQNPDSMNQVFGSTEGSGTAILTFLGGFHPQTEALWLTDIAHHHLAIGCLFVIAGHMYRTNFGIGHSIKEILETHNPPKGTPGDLGAGHKGLYDTINNSLHFQLGLALASLGVVTSLVAQHMYAMPSYAFIAKDYTTSAALYTHHQYIAIALMCGAFAHGAIFFIRDYDPEANKDNVLARMLEHKEAIISHLSWVSLFLGFHTLGLYVHNDVVVAFGTPEKQILVEPVFAQFVQAASGKAIYGFDVLLSNAGGAAANANAAYMDGWMGAINGNTDVFLPIGPGDFLVHHAIALGLHTTTLILVKGALDARGSKLMPDKKDFGYSFPCDGPGRGGTCDISAWDAFYLAVFWALNTVGWLTFYWHWKHLAIWSGNVAQFNESSTYLMGWFRDYLWLNSSQLINGYNPFGSNNLAVWSWMFLFGHLVWATGFMFLISWRGYWQELIETIVWAHQRSPIANMMGWRDKPVALSIVQARVVGLAHFSVGYVLTYAAFLIASTSGKFG.

Transmembrane regions (helical) follow at residues 46-69 (LFST…FHIA), 135-158 (LYQG…LHLQ), 175-199 (LNHH…HVAI), 273-291 (IAHH…GHMY), 333-356 (LHFQ…QHMY), 372-398 (AALY…IFFI), 420-442 (AIIS…LYVH), and 518-536 (FLVH…LILV). Residues Cys560 and Cys569 each contribute to the [4Fe-4S] cluster site. The next 2 helical transmembrane spans lie at 576 to 597 (AFYL…YWHW) and 644 to 666 (LAVW…MFLI). His655, Met663, and Tyr671 together coordinate chlorophyll a. Trp672 serves as a coordination point for phylloquinone. Residues 708–728 (VVGLAHFSVGYVLTYAAFLIA) traverse the membrane as a helical segment.

Belongs to the PsaA/PsaB family. The PsaA/B heterodimer binds the P700 chlorophyll special pair and subsequent electron acceptors. PSI consists of a core antenna complex that captures photons, and an electron transfer chain that converts photonic excitation into a charge separation. The cyanobacterial PSI reaction center is composed of one copy each of PsaA,B,C,D,E,F,I,J,K,L,M and X, and forms trimeric complexes. PSI electron transfer chain: 5 chlorophyll a, 1 chlorophyll a', 2 phylloquinones and 3 4Fe-4S clusters. PSI core antenna: 90 chlorophyll a, 22 carotenoids, 3 phospholipids and 1 galactolipid. P700 is a chlorophyll a/chlorophyll a' dimer, A0 is one or more chlorophyll a, A1 is one or both phylloquinones and FX is a shared 4Fe-4S iron-sulfur center. serves as cofactor.

It localises to the cellular thylakoid membrane. It catalyses the reaction reduced [plastocyanin] + hnu + oxidized [2Fe-2S]-[ferredoxin] = oxidized [plastocyanin] + reduced [2Fe-2S]-[ferredoxin]. In terms of biological role, psaA and PsaB bind P700, the primary electron donor of photosystem I (PSI), as well as the electron acceptors A0, A1 and FX. PSI is a plastocyanin/cytochrome c6-ferredoxin oxidoreductase, converting photonic excitation into a charge separation, which transfers an electron from the donor P700 chlorophyll pair to the spectroscopically characterized acceptors A0, A1, FX, FA and FB in turn. Oxidized P700 is reduced on the lumenal side of the thylakoid membrane by plastocyanin or cytochrome c6. The sequence is that of Photosystem I P700 chlorophyll a apoprotein A2 from Synechococcus sp. (strain CC9902).